The following is a 346-amino-acid chain: Phenylalanine--tRNA ligase alpha subunit (346 aa).

Glu-261 lines the Mg(2+) pocket.

Belongs to the class-II aminoacyl-tRNA synthetase family. Phe-tRNA synthetase alpha subunit type 1 subfamily. Tetramer of two alpha and two beta subunits. Mg(2+) is required as a cofactor.

It is found in the cytoplasm. The catalysed reaction is tRNA(Phe) + L-phenylalanine + ATP = L-phenylalanyl-tRNA(Phe) + AMP + diphosphate + H(+). This Streptococcus agalactiae serotype III (strain NEM316) protein is Phenylalanine--tRNA ligase alpha subunit.